The primary structure comprises 447 residues: Imidazolonepropionase (447 aa).

Fe(3+) is bound by residues histidine 85 and histidine 87. Zn(2+)-binding residues include histidine 85 and histidine 87. The 4-imidazolone-5-propanoate site is built by arginine 94, tyrosine 157, and histidine 190. Residue tyrosine 157 coordinates N-formimidoyl-L-glutamate. Histidine 255 lines the Fe(3+) pocket. Histidine 255 contributes to the Zn(2+) binding site. Glutamate 258 contributes to the 4-imidazolone-5-propanoate binding site. Fe(3+) is bound at residue aspartate 329. Aspartate 329 contacts Zn(2+). Asparagine 331 and glycine 333 together coordinate N-formimidoyl-L-glutamate. Residue serine 334 coordinates 4-imidazolone-5-propanoate.

Belongs to the metallo-dependent hydrolases superfamily. HutI family. The cofactor is Zn(2+). Fe(3+) is required as a cofactor.

Its subcellular location is the cytoplasm. It catalyses the reaction 4-imidazolone-5-propanoate + H2O = N-formimidoyl-L-glutamate. It participates in amino-acid degradation; L-histidine degradation into L-glutamate; N-formimidoyl-L-glutamate from L-histidine: step 3/3. In terms of biological role, catalyzes the hydrolytic cleavage of the carbon-nitrogen bond in imidazolone-5-propanoate to yield N-formimidoyl-L-glutamate. It is the third step in the universal histidine degradation pathway. The chain is Imidazolonepropionase from Shouchella clausii (strain KSM-K16) (Alkalihalobacillus clausii).